The following is a 422-amino-acid chain: Exopolygalacturonase clone GBGE184 (422 aa).

Positions 1 to 31 (MANARSLVAKANNINVGSLILMALVFGSCVA) are cleaved as a signal peptide. PbH1 repeat units follow at residues 200 to 226 (TENV…HLSN), 227 to 248 (ADNV…SVGR), 250 to 270 (SNNV…SVGS), 280 to 301 (VSGI…RIKT), and 310 to 331 (AVDI…IIDQ). N-linked (GlcNAc...) asparagine glycosylation occurs at asparagine 229. Residue aspartate 241 is the Proton donor of the active site. A disulfide bond links cysteine 243 and cysteine 260. The N-linked (GlcNAc...) asparagine glycan is linked to asparagine 252. Residue histidine 264 is part of the active site. Asparagine 287 is a glycosylation site (N-linked (GlcNAc...) asparagine). Disulfide bonds link cysteine 366/cysteine 372 and cysteine 404/cysteine 420.

It belongs to the glycosyl hydrolase 28 family.

The protein localises to the secreted. Its subcellular location is the cell wall. It carries out the reaction [(1-&gt;4)-alpha-D-galacturonosyl](n) + H2O = alpha-D-galacturonate + [(1-&gt;4)-alpha-D-galacturonosyl](n-1). May function in depolymerizing pectin during pollen development, germination, and tube growth. Acts as an exo-polygalacturonase. The protein is Exopolygalacturonase clone GBGE184 (PGA3) of Arabidopsis thaliana (Mouse-ear cress).